Consider the following 689-residue polypeptide: DNA ligase (689 aa).

Residues 58–62 (DQEYD), 107–108 (SL), and Glu138 each bind NAD(+). Residue Lys140 is the N6-AMP-lysine intermediate of the active site. Residues Arg161, Glu198, Lys314, and Lys338 each coordinate NAD(+). Residues Cys432, Cys435, Cys448, and Cys453 each coordinate Zn(2+). The region spanning 611–689 (ASSGTLSGKT…QELLEMLHGG (79 aa)) is the BRCT domain.

Belongs to the NAD-dependent DNA ligase family. LigA subfamily. It depends on Mg(2+) as a cofactor. Mn(2+) is required as a cofactor.

The enzyme catalyses NAD(+) + (deoxyribonucleotide)n-3'-hydroxyl + 5'-phospho-(deoxyribonucleotide)m = (deoxyribonucleotide)n+m + AMP + beta-nicotinamide D-nucleotide.. In terms of biological role, DNA ligase that catalyzes the formation of phosphodiester linkages between 5'-phosphoryl and 3'-hydroxyl groups in double-stranded DNA using NAD as a coenzyme and as the energy source for the reaction. It is essential for DNA replication and repair of damaged DNA. The sequence is that of DNA ligase from Methylacidiphilum infernorum (isolate V4) (Methylokorus infernorum (strain V4)).